The following is a 565-amino-acid chain: Methionine--tRNA ligase (565 aa).

The 'HIGH' region motif lies at 16-26 (PYAYGVPHLGN). 4 residues coordinate Zn(2+): cysteine 148, cysteine 151, cysteine 161, and cysteine 164. The 'KMSKS' region signature appears at 338 to 342 (KFSKS). ATP is bound at residue lysine 341.

It belongs to the class-I aminoacyl-tRNA synthetase family. MetG type 1 subfamily. It depends on Zn(2+) as a cofactor.

It is found in the cytoplasm. It carries out the reaction tRNA(Met) + L-methionine + ATP = L-methionyl-tRNA(Met) + AMP + diphosphate. Its function is as follows. Is required not only for elongation of protein synthesis but also for the initiation of all mRNA translation through initiator tRNA(fMet) aminoacylation. This Thermofilum pendens (strain DSM 2475 / Hrk 5) protein is Methionine--tRNA ligase.